A 128-amino-acid chain; its full sequence is Small ribosomal subunit protein uS11 (128 aa).

The protein belongs to the universal ribosomal protein uS11 family. Part of the 30S ribosomal subunit. Interacts with proteins S7 and S18. Binds to IF-3.

Its function is as follows. Located on the platform of the 30S subunit, it bridges several disparate RNA helices of the 16S rRNA. Forms part of the Shine-Dalgarno cleft in the 70S ribosome. This chain is Small ribosomal subunit protein uS11, found in Wolbachia sp. subsp. Drosophila simulans (strain wRi).